Reading from the N-terminus, the 372-residue chain is 18-hydroxynorfluorocurarine reductase (372 aa).

The Zn(2+) site is built by C47, D50, H69, E70, C100, C103, C106, C114, and C172. Residues 197–202 (GLGGIG), K226, 283–285 (LGA), S307, and R354 each bind NADP(+).

Belongs to the zinc-containing alcohol dehydrogenase family. Homodimer. It depends on Zn(2+) as a cofactor.

It carries out the reaction (19E)-cur-19-en-17-al + NADP(+) = norfluorocurarine + NADPH + H(+). It catalyses the reaction 17,18-epoxy-17-hydroxycur-19-ene + NADP(+) = 18-hydroxynorfluorocurarine + NADPH + H(+). Its pathway is alkaloid biosynthesis. In terms of biological role, alcohol dehydrogenase involved in the biosynthesis of curare monoterpene indole alkaloids (MIAs), natural products such as diaboline, a pharmacologically active compound used to regulate blood pressure. Curare alkaloids act as animal glycine receptor antagonists. Catalyzes the conversion of norfluorocurarine to desoxy Wieland-Gumlich aldehyde, and of 18-OH norfluorocurarine to Wieland-Gumlich aldehyde. This is 18-hydroxynorfluorocurarine reductase from Strychnos sp.